The chain runs to 399 residues: Probable peptidoglycan glycosyltransferase FtsW (399 aa).

The next 9 helical transmembrane spans lie at leucine 33–isoleucine 53, isoleucine 71–phenylalanine 91, isoleucine 98–histidine 118, phenylalanine 160–glutamate 180, aspartate 182–alanine 202, isoleucine 204–leucine 224, isoleucine 287–isoleucine 307, isoleucine 324–asparagine 344, and leucine 359–leucine 379.

The protein belongs to the SEDS family. FtsW subfamily.

The protein resides in the cell inner membrane. The enzyme catalyses [GlcNAc-(1-&gt;4)-Mur2Ac(oyl-L-Ala-gamma-D-Glu-L-Lys-D-Ala-D-Ala)](n)-di-trans,octa-cis-undecaprenyl diphosphate + beta-D-GlcNAc-(1-&gt;4)-Mur2Ac(oyl-L-Ala-gamma-D-Glu-L-Lys-D-Ala-D-Ala)-di-trans,octa-cis-undecaprenyl diphosphate = [GlcNAc-(1-&gt;4)-Mur2Ac(oyl-L-Ala-gamma-D-Glu-L-Lys-D-Ala-D-Ala)](n+1)-di-trans,octa-cis-undecaprenyl diphosphate + di-trans,octa-cis-undecaprenyl diphosphate + H(+). It functions in the pathway cell wall biogenesis; peptidoglycan biosynthesis. Functionally, peptidoglycan polymerase that is essential for cell division. The protein is Probable peptidoglycan glycosyltransferase FtsW of Buchnera aphidicola subsp. Acyrthosiphon pisum (strain APS) (Acyrthosiphon pisum symbiotic bacterium).